The chain runs to 421 residues: Functional amyloid transporter FapF (421 aa).

The first 24 residues, 1–24 (MTQTLSLRAVLCATTLVSPFLAQA), serve as a signal peptide directing secretion. Residues 23–64 (QAATESEVEALKKELLELRQRYEAQQNALMVLEQRVRQVEAQ) adopt a coiled-coil conformation.

Belongs to the amyloid transporter (TC 9.B.153) family.

The protein localises to the secreted. It is found in the cell surface. It localises to the cell outer membrane. Functionally, transports fibril components across the outer membrane. Upon overexpression of the endogenous six-gene locus (fapA-fapF), cells form large clumps during liquid growth, make large amounts of biofilm and produce amyloid fibrils. This is Functional amyloid transporter FapF from Pseudomonas aeruginosa (strain ATCC 15692 / DSM 22644 / CIP 104116 / JCM 14847 / LMG 12228 / 1C / PRS 101 / PAO1).